The sequence spans 132 residues: Small ribosomal subunit protein uS11 (132 aa).

Belongs to the universal ribosomal protein uS11 family. Part of the 30S ribosomal subunit. Interacts with proteins S7 and S18. Binds to IF-3.

Functionally, located on the platform of the 30S subunit, it bridges several disparate RNA helices of the 16S rRNA. Forms part of the Shine-Dalgarno cleft in the 70S ribosome. The chain is Small ribosomal subunit protein uS11 from Chlamydia trachomatis serovar A (strain ATCC VR-571B / DSM 19440 / HAR-13).